The chain runs to 309 residues: Porphobilinogen deaminase (309 aa).

Position 241 is an S-(dipyrrolylmethanemethyl)cysteine (Cys-241).

Belongs to the HMBS family. In terms of assembly, monomer. Dipyrromethane is required as a cofactor.

The catalysed reaction is 4 porphobilinogen + H2O = hydroxymethylbilane + 4 NH4(+). Its pathway is porphyrin-containing compound metabolism; protoporphyrin-IX biosynthesis; coproporphyrinogen-III from 5-aminolevulinate: step 2/4. Tetrapolymerization of the monopyrrole PBG into the hydroxymethylbilane pre-uroporphyrinogen in several discrete steps. This Bacillus cereus (strain G9842) protein is Porphobilinogen deaminase.